Consider the following 117-residue polypeptide: UPF0122 protein Cthe_0771 (117 aa).

The protein belongs to the UPF0122 family.

Might take part in the signal recognition particle (SRP) pathway. This is inferred from the conservation of its genetic proximity to ftsY/ffh. May be a regulatory protein. This chain is UPF0122 protein Cthe_0771, found in Acetivibrio thermocellus (strain ATCC 27405 / DSM 1237 / JCM 9322 / NBRC 103400 / NCIMB 10682 / NRRL B-4536 / VPI 7372) (Clostridium thermocellum).